A 1007-amino-acid chain; its full sequence is RNA-binding protein 26 (1007 aa).

Residue K94 forms a Glycyl lysine isopeptide (Lys-Gly) (interchain with G-Cter in SUMO2) linkage. K106 participates in a covalent cross-link: Glycyl lysine isopeptide (Lys-Gly) (interchain with G-Cter in SUMO1); alternate. A Glycyl lysine isopeptide (Lys-Gly) (interchain with G-Cter in SUMO2); alternate cross-link involves residue K106. Residues 106-118 (KKEEITKEEEREK) show a composition bias toward basic and acidic residues. The interval 106-241 (KKEEITKEEE…YTPVSSVPSI (136 aa)) is disordered. S127 is subject to Phosphoserine. Positions 134–168 (RYRENRSRDERKKDDRSRKRDYDRNPPRRDSYRDR) are enriched in basic and acidic residues. A compositionally biased stretch (basic residues) spans 169–186 (YNRRRGRSRSYSRSRSRS). Basic and acidic residues-rich tracts occupy residues 187–201 (WSKERLRERDRDRSR) and 209–227 (RSRERDLVKPKYDLDRTDP). Polar residues predominate over residues 228-241 (LENNYTPVSSVPSI). The C3H1-type zinc-finger motif lies at 288-316 (PMPKKRCRDYDEKGFCMRGDMCPFDHGSD). A compositionally biased stretch (pro residues) spans 334 to 388 (QPPVVEGPPPPGLPPPPPILTPPPVNLRPPVPPPGPLPPSLPPVTGPPPPLPPLQ). Disordered stretches follow at residues 334–404 (QPPV…SSVP) and 460–519 (IGLT…TNSP). The span at 394-404 (APPNSATSSVP) shows a compositional bias: low complexity. Residue S496 is modified to Phosphoserine. K510 is subject to N6-acetyllysine. Residue S518 is modified to Phosphoserine. The region spanning 532-606 (TKLELRKVPP…RFIKVYWHRE (75 aa)) is the RRM 1 domain. S616 is subject to Phosphoserine. Coiled coils occupy residues 719-795 (DNNE…KAAS) and 823-847 (KKMQAGEEVTELRRKYTELQLEAAK). A disordered region spans residues 853–884 (SGRGRGIHSRGRGAVHGRGRGRGRGRGVPGHA). The span at 857–877 (RGIHSRGRGAVHGRGRGRGRG) shows a compositional bias: basic residues. In terms of domain architecture, RRM 2 spans 891-960 (RALEISAFTE…QDLKLAWNKP (70 aa)). Residues 966 to 1007 (AVETEEVEPDEEEFQEESLVDDSLLQDDDEEEEDNESRSWRR) form a disordered region. A compositionally biased stretch (acidic residues) spans 968–1000 (ETEEVEPDEEEFQEESLVDDSLLQDDDEEEEDN).

In terms of biological role, may be involved in the turnover of nuclear polyadenylated (pA+) RNA. This Homo sapiens (Human) protein is RNA-binding protein 26.